The chain runs to 694 residues: Polynucleotide 3'-phosphatase ZDP (694 aa).

PARP-type zinc fingers lie at residues 50–132 (VVAE…EQCG) and 165–247 (VIAD…EVNK). Residues Cys62, Cys65, His93, Cys96, Cys177, Cys180, His208, and Cys211 each contribute to the Zn(2+) site. The disordered stretch occupies residues 266-331 (AIADNELTEE…SPDSSKVISE (66 aa)). A compositionally biased stretch (basic and acidic residues) spans 302 to 321 (ESKKPASDEISEQKTKDVKN). A compositionally biased stretch (polar residues) spans 322–331 (SPDSSKVISE). Residues 328–410 (VISEYAKSSR…ALKELVQQCG (83 aa)) form a PARP-type 3 zinc finger. Cys340, Cys343, His371, and Cys374 together coordinate Zn(2+).

It in the C-terminal section; belongs to the DNA 3' phosphatase family. In terms of assembly, interacts with ROS1 (via the central region). Binds to XRCC1.

The protein localises to the nucleus. It localises to the nucleoplasm. The catalysed reaction is a 3'end (2'-deoxyribonucleotide 3'-phosphate)-DNA + H2O = a 3'-end 2'-deoxyribonucleotide-DNA + phosphate. Activated by the presence of DNA. Stimulated by XRCC1. Its function is as follows. Nick-sensing 3'-phosphoesterase involved in a base excision repair pathway required for active DNA demethylation. The N-terminal DNA-binding domain binds specifically to gap sites and sharply bends the target DNA. Lacks 5'-kinase activity but is capable of 3'-phosphoglycolate end processing. Inactive on 3'-alpha,beta-unsaturated aldehyde (3'-dRP). Protects partially genes from transcriptional silencing by preventing promoter DNA hypermethylation. The sequence is that of Polynucleotide 3'-phosphatase ZDP (ZDP) from Arabidopsis thaliana (Mouse-ear cress).